The following is a 102-amino-acid chain: Acid shock protein (102 aa).

A signal peptide spans 1 to 21 (MKKVLALVVAAAMGLSSAAFA). The span at 21 to 41 (AAETTTTPAPTATTTKAAPAK) shows a compositional bias: low complexity. The segment at 21–102 (AAETTTTPAP…PAKPAAQPAA (82 aa)) is disordered. Positions 22 to 58 (AETTTTPAPTATTTKAAPAKTTHHKKQHKAAPAQKAQ) are excised as a propeptide. Basic residues predominate over residues 80–90 (AAKKHAKKHSH). The span at 91 to 102 (QQPAKPAAQPAA) shows a compositional bias: low complexity.

The protein belongs to the Asr family. In terms of processing, proteolytic processing gives rise to the active protein.

The protein resides in the periplasm. Functionally, required for growth and/or survival at acidic conditions. In Escherichia coli (strain K12 / MC4100 / BW2952), this protein is Acid shock protein.